The following is a 350-amino-acid chain: 3'-hydroxy-N-methyl-(S)-coclaurine 4'-O-methyltransferase (350 aa).

Positions 196, 219, 239, 240, and 253 each coordinate S-adenosyl-L-methionine. The Proton acceptor role is filled by His257.

This sequence belongs to the class I-like SAM-binding methyltransferase superfamily. Cation-independent O-methyltransferase family. COMT subfamily. Homodimer.

The enzyme catalyses (S)-3'-hydroxy-N-methylcoclaurine + S-adenosyl-L-methionine = (S)-reticuline + S-adenosyl-L-homocysteine + H(+). It functions in the pathway alkaloid biosynthesis; (S)-reticuline biosynthesis; (S)-reticuline from (S)-norcoclaurine: step 4/4. In terms of biological role, catalyzes the transfer of the methyl group to the 4'-hydroxyl group of 3'-hydroxy-N-methylcoclaurine to form reticuline. This chain is 3'-hydroxy-N-methyl-(S)-coclaurine 4'-O-methyltransferase, found in Coptis japonica (Japanese goldthread).